Here is a 229-residue protein sequence, read N- to C-terminus: DNA mismatch repair protein MutH (229 aa).

Belongs to the MutH family.

It localises to the cytoplasm. Its function is as follows. Sequence-specific endonuclease that cleaves unmethylated GATC sequences. It is involved in DNA mismatch repair. This is DNA mismatch repair protein MutH from Shigella dysenteriae serotype 1 (strain Sd197).